The sequence spans 142 residues: Large ribosomal subunit protein uL11 (142 aa).

Belongs to the universal ribosomal protein uL11 family. Part of the ribosomal stalk of the 50S ribosomal subunit. Interacts with L10 and the large rRNA to form the base of the stalk. L10 forms an elongated spine to which L12 dimers bind in a sequential fashion forming a multimeric L10(L12)X complex. In terms of processing, one or more lysine residues are methylated.

Functionally, forms part of the ribosomal stalk which helps the ribosome interact with GTP-bound translation factors. This chain is Large ribosomal subunit protein uL11, found in Solibacter usitatus (strain Ellin6076).